Here is a 190-residue protein sequence, read N- to C-terminus: Probable nicotinate-nucleotide adenylyltransferase (190 aa).

Belongs to the NadD family.

The catalysed reaction is nicotinate beta-D-ribonucleotide + ATP + H(+) = deamido-NAD(+) + diphosphate. The protein operates within cofactor biosynthesis; NAD(+) biosynthesis; deamido-NAD(+) from nicotinate D-ribonucleotide: step 1/1. In terms of biological role, catalyzes the reversible adenylation of nicotinate mononucleotide (NaMN) to nicotinic acid adenine dinucleotide (NaAD). In Frankia casuarinae (strain DSM 45818 / CECT 9043 / HFP020203 / CcI3), this protein is Probable nicotinate-nucleotide adenylyltransferase.